Here is a 688-residue protein sequence, read N- to C-terminus: UvrABC system protein C (688 aa).

The GIY-YIG domain occupies 11 to 90 (LTPGVYLYKD…IKKHRPRYNI (80 aa)). The UVR domain occupies 200–235 (GELVDALRTEMEAASQGLDFERAAVLRDRIRALERT).

The protein belongs to the UvrC family. Interacts with UvrB in an incision complex.

The protein resides in the cytoplasm. Functionally, the UvrABC repair system catalyzes the recognition and processing of DNA lesions. UvrC both incises the 5' and 3' sides of the lesion. The N-terminal half is responsible for the 3' incision and the C-terminal half is responsible for the 5' incision. The polypeptide is UvrABC system protein C (Nitratidesulfovibrio vulgaris (strain ATCC 29579 / DSM 644 / CCUG 34227 / NCIMB 8303 / VKM B-1760 / Hildenborough) (Desulfovibrio vulgaris)).